A 78-amino-acid chain; its full sequence is Small ribosomal subunit protein bS20 (78 aa).

A disordered region spans residues 1–34; the sequence is MANIKSNLKRNKQNRARHTVVHSQTSAVKTQIKK. The span at 7-20 shows a compositional bias: basic residues; the sequence is NLKRNKQNRARHTV. The segment covering 21 to 34 has biased composition (polar residues); that stretch reads VHSQTSAVKTQIKK.

This sequence belongs to the bacterial ribosomal protein bS20 family.

In terms of biological role, binds directly to 16S ribosomal RNA. In Malacoplasma penetrans (strain HF-2) (Mycoplasma penetrans), this protein is Small ribosomal subunit protein bS20.